The sequence spans 571 residues: Proline--tRNA ligase (571 aa).

The protein belongs to the class-II aminoacyl-tRNA synthetase family. ProS type 1 subfamily. In terms of assembly, homodimer.

It is found in the cytoplasm. It catalyses the reaction tRNA(Pro) + L-proline + ATP = L-prolyl-tRNA(Pro) + AMP + diphosphate. Its function is as follows. Catalyzes the attachment of proline to tRNA(Pro) in a two-step reaction: proline is first activated by ATP to form Pro-AMP and then transferred to the acceptor end of tRNA(Pro). As ProRS can inadvertently accommodate and process non-cognate amino acids such as alanine and cysteine, to avoid such errors it has two additional distinct editing activities against alanine. One activity is designated as 'pretransfer' editing and involves the tRNA(Pro)-independent hydrolysis of activated Ala-AMP. The other activity is designated 'posttransfer' editing and involves deacylation of mischarged Ala-tRNA(Pro). The misacylated Cys-tRNA(Pro) is not edited by ProRS. This is Proline--tRNA ligase from Actinobacillus pleuropneumoniae serotype 5b (strain L20).